Consider the following 419-residue polypeptide: Hyaluronan synthase (419 aa).

Transmembrane regions (helical) follow at residues 8-28, 33-53, 318-338, 345-365, and 376-396; these read LIVL…MYLF, VGIY…LSFL, IVAL…VAIG, AIQL…IVAL, and PASF…LQPL.

Belongs to the NodC/HAS family. The cofactor is Mg(2+).

It localises to the cell membrane. It catalyses the reaction [hyaluronan](n) + UDP-N-acetyl-alpha-D-glucosamine = N-acetyl-beta-D-glucosaminyl-(1-&gt;4)-[hyaluronan](n) + UDP + H(+). The catalysed reaction is N-acetyl-beta-D-glucosaminyl-(1-&gt;4)-[hyaluronan](n) + UDP-alpha-D-glucuronate = [hyaluronan](n+1) + UDP + H(+). It functions in the pathway glycan biosynthesis; hyaluronan biosynthesis. Functionally, glycosaminoglycan synthesis. The hyaluronic acid capsule is involved in the pathogenicity of group A Streptococci; it may be the major virulence determinant. This Streptococcus pyogenes serotype M18 (strain MGAS8232) protein is Hyaluronan synthase (hasA).